Here is a 1228-residue protein sequence, read N- to C-terminus: MDRHDTMDFTNEPLSKKRRFLGDQGDSDHVAGGPSSSPQFSAPPSSPPRKKLLQDPNSEVQPRVSKDADHNDDDDDDDDDDDEERPRFFTDDGTLTPHATKICAPWLNDMPKPDPRKGYLLKDVDTPIATPRDVAPPVVESPQLAFDKDTFEAFVGEKVASDILHVISKNCGNNIERAVNMYLDGTWKKLHRAPPVRVNSHSPLVVGGQSPKKSSTSQARSRSHAQAQPQPQSNTPTKVLPSMPDARYVGAFGVEGWATRSGTGLLRHGDSVKIERQKIQPPTVARKGQTKPGTPQSIPRVSAAAAKRVDVIVRFNDASGRELGRLAKDTANWVSTLIDQNICRFEGICVYAPERLRTNETVFLQLKCYMLRSAFLGRTLQLADNRAAGFHEKDETTEEKDLRLRQVALVRLFQEINIVPSRGNAAAAKDARKDLLEAADSAEKKAMDKAKAGDHNTNGLASPPEEAEEGQELEQDQLDALYKKAQSFDFSTPEAEPANTFAMTLRPYQKQSLYWMLAKEKNQRTEDRETSMHPLWEEYVWPTKDHDDKDLPVVPDQPCFYVNPYSGDLSLDFPKQEQHCLGGILADEMGLGKTIQMLSLIHSHRSEVAIKAREAGPTSVNNLPRLPTVSGQKTTIDAPCTTLVVAPMSLLAQWQSEAENASKEGTFKTMMYYGAEKNVDLVTMCCEANAANAPDVIITSYGVVLSEFTQLATKNGDRLSSRGLFSLNFFRVILDEAHNIKNRQAKTSRACYEIAAEHRWVLTGTPIVNRLEDLFSLVRFLRVEPWNNFSFWRTFITVPFESKNFVRALDVVQTVLEPLVMRRTKDMKTPDGQFLVPLPPKHIEIVDIELSEPERAVYDYVFNRAKRTLFDNMQAGTVMKAFTSIFAQILRLRQSCCHPVLVRNQEILADEEEANMAADVAAGLADDMDLQTLIERFTATTDDASKTNNNFGAHVLRQIRDEAVNECPICAEEPMIDQAVTGCWHSACKKCLLDYIKHQTDRNEVPRCFQCREHINIRDIFEVIRHDDDLETSSTPGASPEPRISLQRVGANDSSAKIVALISHLRTLRQEHPKMKSLVISQFTSFLSLISSALTRHKISFLRLDGSMSQKARAAVLTEFQSTNKFCVLLLSLKAGGVGLNLTSAKRVYMMDPWWSFAVEAQAIDRVHRMGQEDEVRVYRFIVKQSVEMRMLRVQERKKFIATSLGMMSDEEKKMQRIEDIKELLSSD.

Disordered regions lie at residues 1–96 (MDRH…GTLT), 194–242 (PPVR…VLPS), 280–302 (QPPTVARKGQTKPGTPQSIPRVS), and 445–474 (KAMDKAKAGDHNTNGLASPPEEAEEGQELE). Positions 34 to 43 (PSSSPQFSAP) are enriched in low complexity. Residues 70–83 (HNDDDDDDDDDDDE) show a composition bias toward acidic residues. A compositionally biased stretch (polar residues) spans 211–237 (PKKSSTSQARSRSHAQAQPQPQSNTPT). Positions 445-454 (KAMDKAKAGD) are enriched in basic and acidic residues. A compositionally biased stretch (acidic residues) spans 465-474 (EEAEEGQELE). A Helicase ATP-binding domain is found at 574–784 (PKQEQHCLGG…FSLVRFLRVE (211 aa)). An ATP-binding site is contributed by 587–594 (DEMGLGKT). Residues 735–738 (DEAH) carry the DEAH box motif. The RING-type zinc finger occupies 967-1012 (CPICAEEPMIDQAVTGCWHSACKKCLLDYIKHQTDRNEVPRCFQCR). The region spanning 1060–1216 (ALISHLRTLR…MMSDEEKKMQ (157 aa)) is the Helicase C-terminal domain.

It belongs to the SNF2/RAD54 helicase family.

It localises to the cytoplasm. The protein localises to the nucleus. Functionally, probable helicase, member of the UBC2/RAD6 epistasis group. Functions with DNA repair protein uvs-2/rad18 in error-free postreplication DNA repair. Involved in the maintenance of wild-type rates of instability of simple repetitive sequences such as poly(GT) repeats. Seems to be involved in maintaining a balance which acts in favor of error-prone non-homologous joining during DNA double-strand breaks repairs. This is DNA repair protein rad5 (mus-41) from Neurospora crassa (strain ATCC 24698 / 74-OR23-1A / CBS 708.71 / DSM 1257 / FGSC 987).